Reading from the N-terminus, the 197-residue chain is Nucleoid occlusion factor SlmA (197 aa).

The HTH tetR-type domain maps to 7 to 67; sequence INRREHILQC…GLIDFIEESL (61 aa). Residues 30–49 constitute a DNA-binding region (H-T-H motif); sequence TTAKLAAEVGVSEAALYRHF.

This sequence belongs to the nucleoid occlusion factor SlmA family. As to quaternary structure, homodimer. Interacts with FtsZ.

The protein localises to the cytoplasm. It is found in the nucleoid. Functionally, required for nucleoid occlusion (NO) phenomenon, which prevents Z-ring formation and cell division over the nucleoid. Acts as a DNA-associated cell division inhibitor that binds simultaneously chromosomal DNA and FtsZ, and disrupts the assembly of FtsZ polymers. SlmA-DNA-binding sequences (SBS) are dispersed on non-Ter regions of the chromosome, preventing FtsZ polymerization at these regions. The sequence is that of Nucleoid occlusion factor SlmA from Shewanella sediminis (strain HAW-EB3).